A 153-amino-acid chain; its full sequence is Probable inactive ribonuclease-like protein 13 (153 aa).

The N-terminal stretch at 1–22 (MAPDVAWLLVLPLVFRPTLVTG) is a signal peptide.

This sequence belongs to the pancreatic ribonuclease family.

It is found in the secreted. Does not exhibit any ribonuclease activity. The polypeptide is Probable inactive ribonuclease-like protein 13 (Rnase13) (Mus musculus (Mouse)).